We begin with the raw amino-acid sequence, 127 residues long: Large ribosomal subunit protein bL12 (127 aa).

Belongs to the bacterial ribosomal protein bL12 family. As to quaternary structure, homodimer. Part of the ribosomal stalk of the 50S ribosomal subunit. Forms a multimeric L10(L12)X complex, where L10 forms an elongated spine to which 2 to 4 L12 dimers bind in a sequential fashion. Binds GTP-bound translation factors.

Its function is as follows. Forms part of the ribosomal stalk which helps the ribosome interact with GTP-bound translation factors. Is thus essential for accurate translation. This is Large ribosomal subunit protein bL12 from Streptomyces griseus subsp. griseus (strain JCM 4626 / CBS 651.72 / NBRC 13350 / KCC S-0626 / ISP 5235).